We begin with the raw amino-acid sequence, 409 residues long: N-acetylglucosamine-6-phosphate deacetylase (409 aa).

A divalent metal cation is bound at residue E143. 154-155 is a binding site for substrate; sequence AH. Residues H211 and H232 each coordinate a divalent metal cation. Substrate contacts are provided by residues 235–236, R243, and 269–272; these read NA and DGIH. D294 serves as the catalytic Proton donor/acceptor. 328–330 is a substrate binding site; that stretch reads LGG.

The protein belongs to the metallo-dependent hydrolases superfamily. NagA family. Requires a divalent metal cation as cofactor.

It catalyses the reaction N-acetyl-D-glucosamine 6-phosphate + H2O = D-glucosamine 6-phosphate + acetate. It participates in amino-sugar metabolism; N-acetylneuraminate degradation. In terms of biological role, hydrolyzes the N-glycolyl group from N-glycolylglucosamine 6-phosphate (GlcNGc-6-P) in the N-glycolylneuraminic acid (Neu5Gc) degradation pathway. This chain is N-acetylglucosamine-6-phosphate deacetylase (Amdhd2), found in Mus musculus (Mouse).